We begin with the raw amino-acid sequence, 324 residues long: Aspartate carbamoyltransferase catalytic subunit (324 aa).

Positions 65 and 66 each coordinate carbamoyl phosphate. An L-aspartate-binding site is contributed by lysine 93. Positions 115, 145, and 148 each coordinate carbamoyl phosphate. 2 residues coordinate L-aspartate: arginine 178 and arginine 233. Glycine 274 and proline 275 together coordinate carbamoyl phosphate.

This sequence belongs to the aspartate/ornithine carbamoyltransferase superfamily. ATCase family. In terms of assembly, heterododecamer (2C3:3R2) of six catalytic PyrB chains organized as two trimers (C3), and six regulatory PyrI chains organized as three dimers (R2).

It catalyses the reaction carbamoyl phosphate + L-aspartate = N-carbamoyl-L-aspartate + phosphate + H(+). Its pathway is pyrimidine metabolism; UMP biosynthesis via de novo pathway; (S)-dihydroorotate from bicarbonate: step 2/3. In terms of biological role, catalyzes the condensation of carbamoyl phosphate and aspartate to form carbamoyl aspartate and inorganic phosphate, the committed step in the de novo pyrimidine nucleotide biosynthesis pathway. The chain is Aspartate carbamoyltransferase catalytic subunit from Nitrosococcus oceani (strain ATCC 19707 / BCRC 17464 / JCM 30415 / NCIMB 11848 / C-107).